Here is a 468-residue protein sequence, read N- to C-terminus: Ribulose bisphosphate carboxylase large chain (468 aa).

Lys5 is subject to N6,N6,N6-trimethyllysine. Substrate contacts are provided by Asn114 and Thr164. The Proton acceptor role is filled by Lys166. Lys168 provides a ligand contact to substrate. Residues Lys192, Asp194, and Glu195 each coordinate Mg(2+). An N6-carboxylysine modification is found at Lys192. The active-site Proton acceptor is His285. Substrate-binding residues include Arg286, His318, and Ser370.

This sequence belongs to the RuBisCO large chain family. Type I subfamily. Heterohexadecamer of 8 large chains and 8 small chains; disulfide-linked. The disulfide link is formed within the large subunit homodimers. It depends on Mg(2+) as a cofactor. The disulfide bond which can form in the large chain dimeric partners within the hexadecamer appears to be associated with oxidative stress and protein turnover.

It localises to the plastid. Its subcellular location is the chloroplast. It catalyses the reaction 2 (2R)-3-phosphoglycerate + 2 H(+) = D-ribulose 1,5-bisphosphate + CO2 + H2O. The enzyme catalyses D-ribulose 1,5-bisphosphate + O2 = 2-phosphoglycolate + (2R)-3-phosphoglycerate + 2 H(+). RuBisCO catalyzes two reactions: the carboxylation of D-ribulose 1,5-bisphosphate, the primary event in carbon dioxide fixation, as well as the oxidative fragmentation of the pentose substrate in the photorespiration process. Both reactions occur simultaneously and in competition at the same active site. The protein is Ribulose bisphosphate carboxylase large chain of Salvia divinorum (Maria pastora).